A 177-amino-acid chain; its full sequence is Coatomer subunit zeta-1 (177 aa).

This sequence belongs to the adaptor complexes small subunit family. In terms of assembly, oligomeric complex that consists of at least the alpha, beta, beta', gamma, delta, epsilon and zeta subunits.

It localises to the cytoplasm. It is found in the golgi apparatus membrane. The protein resides in the cytoplasmic vesicle. The protein localises to the COPI-coated vesicle membrane. In terms of biological role, the coatomer is a cytosolic protein complex that binds to dilysine motifs and reversibly associates with Golgi non-clathrin-coated vesicles, which further mediate biosynthetic protein transport from the ER, via the Golgi up to the trans Golgi network. Coatomer complex is required for budding from Golgi membranes, and is essential for the retrograde Golgi-to-ER transport of dilysine-tagged proteins. The zeta subunit may be involved in regulating the coat assembly and, hence, the rate of biosynthetic protein transport due to its association-dissociation properties with the coatomer complex. This is Coatomer subunit zeta-1 from Arabidopsis thaliana (Mouse-ear cress).